A 323-amino-acid polypeptide reads, in one-letter code: tRNA U34 carboxymethyltransferase (323 aa).

Carboxy-S-adenosyl-L-methionine is bound by residues Lys91, Trp105, Lys110, Gly130, 152–154, 181–182, Met196, Tyr200, and Arg315; these read DPT and IE.

The protein belongs to the class I-like SAM-binding methyltransferase superfamily. CmoB family. In terms of assembly, homotetramer.

The catalysed reaction is carboxy-S-adenosyl-L-methionine + 5-hydroxyuridine(34) in tRNA = 5-carboxymethoxyuridine(34) in tRNA + S-adenosyl-L-homocysteine + H(+). Functionally, catalyzes carboxymethyl transfer from carboxy-S-adenosyl-L-methionine (Cx-SAM) to 5-hydroxyuridine (ho5U) to form 5-carboxymethoxyuridine (cmo5U) at position 34 in tRNAs. This Salmonella paratyphi A (strain ATCC 9150 / SARB42) protein is tRNA U34 carboxymethyltransferase.